A 256-amino-acid polypeptide reads, in one-letter code: D-aminoacyl-tRNA deacylase (256 aa).

The protein belongs to the DtdA deacylase family. In terms of assembly, monomer. It depends on Zn(2+) as a cofactor.

It carries out the reaction a D-aminoacyl-tRNA + H2O = a tRNA + a D-alpha-amino acid + H(+). The enzyme catalyses glycyl-tRNA(Ala) + H2O = tRNA(Ala) + glycine + H(+). In terms of biological role, D-aminoacyl-tRNA deacylase with broad substrate specificity. By recycling D-aminoacyl-tRNA to D-amino acids and free tRNA molecules, this enzyme counteracts the toxicity associated with the formation of D-aminoacyl-tRNA entities in vivo. The sequence is that of D-aminoacyl-tRNA deacylase from Thermoplasma volcanium (strain ATCC 51530 / DSM 4299 / JCM 9571 / NBRC 15438 / GSS1).